Here is a 413-residue protein sequence, read N- to C-terminus: Multifunctional CCA protein (413 aa).

2 residues coordinate ATP: glycine 8 and arginine 11. The CTP site is built by glycine 8 and arginine 11. The Mg(2+) site is built by aspartate 21 and aspartate 23. The ATP site is built by arginine 91, arginine 141, and arginine 144. CTP is bound by residues arginine 91, arginine 141, and arginine 144. The HD domain maps to 230 to 331 (TGAHLLLVLD…VRLLERCDAL (102 aa)).

Belongs to the tRNA nucleotidyltransferase/poly(A) polymerase family. Bacterial CCA-adding enzyme type 1 subfamily. In terms of assembly, monomer. Can also form homodimers and oligomers. Mg(2+) is required as a cofactor. It depends on Ni(2+) as a cofactor.

The catalysed reaction is a tRNA precursor + 2 CTP + ATP = a tRNA with a 3' CCA end + 3 diphosphate. The enzyme catalyses a tRNA with a 3' CCA end + 2 CTP + ATP = a tRNA with a 3' CCACCA end + 3 diphosphate. Its function is as follows. Catalyzes the addition and repair of the essential 3'-terminal CCA sequence in tRNAs without using a nucleic acid template. Adds these three nucleotides in the order of C, C, and A to the tRNA nucleotide-73, using CTP and ATP as substrates and producing inorganic pyrophosphate. tRNA 3'-terminal CCA addition is required both for tRNA processing and repair. Also involved in tRNA surveillance by mediating tandem CCA addition to generate a CCACCA at the 3' terminus of unstable tRNAs. While stable tRNAs receive only 3'-terminal CCA, unstable tRNAs are marked with CCACCA and rapidly degraded. The sequence is that of Multifunctional CCA protein from Verminephrobacter eiseniae (strain EF01-2).